We begin with the raw amino-acid sequence, 122 residues long: Small ribosomal subunit protein uS13 (122 aa).

The segment at 93–122 is disordered; sequence RRGLPVRGQRTKTNARTRKGPKKTIAGKKK.

The protein belongs to the universal ribosomal protein uS13 family. As to quaternary structure, part of the 30S ribosomal subunit. Forms a loose heterodimer with protein S19. Forms two bridges to the 50S subunit in the 70S ribosome.

Functionally, located at the top of the head of the 30S subunit, it contacts several helices of the 16S rRNA. In the 70S ribosome it contacts the 23S rRNA (bridge B1a) and protein L5 of the 50S subunit (bridge B1b), connecting the 2 subunits; these bridges are implicated in subunit movement. Contacts the tRNAs in the A and P-sites. The sequence is that of Small ribosomal subunit protein uS13 from Corynebacterium urealyticum (strain ATCC 43042 / DSM 7109).